A 77-amino-acid chain; its full sequence is Acyl carrier protein (77 aa).

The Carrier domain occupies 2–77 (ADVMERVTKI…DVVDYINNNQ (76 aa)). O-(pantetheine 4'-phosphoryl)serine is present on Ser-37.

It belongs to the acyl carrier protein (ACP) family. 4'-phosphopantetheine is transferred from CoA to a specific serine of apo-ACP by AcpS. This modification is essential for activity because fatty acids are bound in thioester linkage to the sulfhydryl of the prosthetic group.

Its subcellular location is the cytoplasm. It functions in the pathway lipid metabolism; fatty acid biosynthesis. Its function is as follows. Carrier of the growing fatty acid chain in fatty acid biosynthesis. This Shouchella clausii (strain KSM-K16) (Alkalihalobacillus clausii) protein is Acyl carrier protein.